The chain runs to 141 residues: Nucleoside diphosphate kinase (141 aa).

The ATP site is built by Lys11, Phe59, Arg87, Thr93, Arg104, and Asn114. Catalysis depends on His117, which acts as the Pros-phosphohistidine intermediate.

It belongs to the NDK family. As to quaternary structure, homotetramer. The cofactor is Mg(2+).

The protein localises to the cytoplasm. The enzyme catalyses a 2'-deoxyribonucleoside 5'-diphosphate + ATP = a 2'-deoxyribonucleoside 5'-triphosphate + ADP. It catalyses the reaction a ribonucleoside 5'-diphosphate + ATP = a ribonucleoside 5'-triphosphate + ADP. Functionally, major role in the synthesis of nucleoside triphosphates other than ATP. The ATP gamma phosphate is transferred to the NDP beta phosphate via a ping-pong mechanism, using a phosphorylated active-site intermediate. The sequence is that of Nucleoside diphosphate kinase from Cupriavidus necator (strain ATCC 17699 / DSM 428 / KCTC 22496 / NCIMB 10442 / H16 / Stanier 337) (Ralstonia eutropha).